Here is a 337-residue protein sequence, read N- to C-terminus: 1-aminocyclopropane-1-carboxylate deaminase (337 aa).

Lys50 is modified (N6-(pyridoxal phosphate)lysine). Ser77 functions as the Nucleophile in the catalytic mechanism.

This sequence belongs to the ACC deaminase/D-cysteine desulfhydrase family. As to quaternary structure, homotrimer. Requires pyridoxal 5'-phosphate as cofactor.

The enzyme catalyses 1-aminocyclopropane-1-carboxylate + H2O = 2-oxobutanoate + NH4(+). In terms of biological role, catalyzes a cyclopropane ring-opening reaction, the irreversible conversion of 1-aminocyclopropane-1-carboxylate (ACC) to ammonia and alpha-ketobutyrate. Allows growth on ACC as a nitrogen source. This is 1-aminocyclopropane-1-carboxylate deaminase from Methylobacterium nodulans (strain LMG 21967 / CNCM I-2342 / ORS 2060).